The following is a 232-amino-acid chain: Alpha N-terminal protein methyltransferase 1 (232 aa).

S-adenosyl-L-methionine-binding positions include G71, R76, 123 to 124 (MQ), and Q139.

It belongs to the methyltransferase superfamily. NTM1 family.

The protein localises to the cytoplasm. The enzyme catalyses N-terminal L-alanyl-L-prolyl-L-lysyl-[protein] + 3 S-adenosyl-L-methionine = N-terminal N,N,N-trimethyl-L-alanyl-L-prolyl-L-lysyl-[protein] + 3 S-adenosyl-L-homocysteine + 3 H(+). It catalyses the reaction N-terminal L-seryl-L-prolyl-L-lysyl-[protein] + 3 S-adenosyl-L-methionine = N-terminal N,N,N-trimethyl-L-seryl-L-prolyl-L-lysyl-[protein] + 3 S-adenosyl-L-homocysteine + 3 H(+). The catalysed reaction is N-terminal L-prolyl-L-prolyl-L-lysyl-[protein] + 2 S-adenosyl-L-methionine = N-terminal N,N-dimethyl-L-prolyl-L-prolyl-L-lysyl-[protein] + 2 S-adenosyl-L-homocysteine + 2 H(+). Alpha-N-methyltransferase that methylates the N-terminus of target proteins containing the N-terminal motif [Ala/Pro/Ser]-Pro-Lys when the initiator Met is cleaved. Specifically catalyzes mono-, di- or tri-methylation of exposed alpha-amino group of Ala or Ser residue in the [Ala/Ser]-Pro-Lys motif and mono- or di-methylation of Pro in the Pro-Pro-Lys motif. Responsible for the N-terminal methylation of the ribosomal proteins RPL12A, RPL12B, RPS25A and RPS25B. The sequence is that of Alpha N-terminal protein methyltransferase 1 (TAE1) from Saccharomyces cerevisiae (strain ATCC 204508 / S288c) (Baker's yeast).